A 101-amino-acid chain; its full sequence is uncharacterized protein (101 aa).

A signal peptide spans 1-25; the sequence is MISIPFRSTMSRTLVFIILPTVLSC.

This is an uncharacterized protein from Saccharomyces cerevisiae (strain ATCC 204508 / S288c) (Baker's yeast).